The following is a 142-amino-acid chain: Universal stress protein G (142 aa).

This sequence belongs to the universal stress protein A family.

This chain is Universal stress protein G (uspG), found in Escherichia coli O157:H7.